The following is a 651-amino-acid chain: Protein cueball (651 aa).

The N-terminal stretch at 1 to 21 (MILRLFILLSIITVYLQLSVG) is a signal peptide. Topologically, residues 22 to 540 (IQQQFEFAIT…VCLAPNAWTG (519 aa)) are extracellular. Asn77, Asn102, and Asn114 each carry an N-linked (GlcNAc...) asparagine glycan. LDL-receptor class B repeat units follow at residues 115–162 (RTIY…DICG), 163–207 (RKLY…DQGA), and 208–253 (KRIF…TRNA). N-linked (GlcNAc...) asparagine glycosylation occurs at Asn183. The interval 290–311 (VEGEEGTGAMDDNDIWPVGDFE) is disordered. Residue Asn324 is glycosylated (N-linked (GlcNAc...) asparagine). EGF-like domains lie at 374–408 (QLDELQREHCLGGGTYYPQQKFCVCVPGYKGTRCE), 409–440 (TNECHNFCVHGTCQISEMGYPKCYCQPGYSGE), and 443–480 (EVKKCLNFCQNGGDCQLDELTGEASCQCPSNFGGLRCE). Cystine bridges form between Cys383/Cys396, Cys398/Cys407, Cys412/Cys421, Cys416/Cys431, Cys447/Cys457, Cys451/Cys468, and Cys470/Cys479. Residues Asn482 and Asn499 are each glycosylated (N-linked (GlcNAc...) asparagine). The chain crosses the membrane as a helical span at residues 541–561 (SVLMPLMISLILILLLLTIFI). Over 562–651 (HGLRRLYKPK…LIHNMEDDLY (90 aa)) the chain is Cytoplasmic.

The protein belongs to the cueball family.

The protein resides in the cell membrane. Has a role in spermatogenesis and oogenesis. This chain is Protein cueball, found in Drosophila willistoni (Fruit fly).